The chain runs to 538 residues: BTB/POZ domain-containing protein 6 (538 aa).

The first 17 residues, M1–T17, serve as a signal peptide directing secretion. Disordered regions lie at residues P29–K53 and A76–W115. Over residues A35–K53 the composition is skewed to low complexity. A compositionally biased stretch (pro residues) spans R85 to P103. Positions A136 to A206 constitute a BTB domain.

In terms of tissue distribution, expressed in lens.

Its subcellular location is the cytoplasm. Functionally, adapter protein for the cul3 E3 ubiquitin-protein ligase complex. Involved in late neuronal development and muscle formation. The sequence is that of BTB/POZ domain-containing protein 6 from Homo sapiens (Human).